The following is a 534-amino-acid chain: C-22 sterol desaturase ERG5B (534 aa).

Residues 43–61 traverse the membrane as a helical segment; sequence IAVTIFAVLIAYDQFMYIW. Residue cysteine 480 coordinates heme.

This sequence belongs to the cytochrome P450 family. The cofactor is heme.

The protein resides in the endoplasmic reticulum membrane. It carries out the reaction 5-dehydroepisterol + NADPH + O2 + H(+) = ergosta-5,7,22,24(28)-tetraen-3beta-ol + NADP(+) + 2 H2O. Its pathway is steroid metabolism; ergosterol biosynthesis. In terms of biological role, C-22 sterol desaturase; part of the third module of ergosterol biosynthesis pathway that includes the late steps of the pathway. ERG5A and ERG5B convert 5-dehydroepisterol into ergosta-5,7,22,24(28)-tetraen-3beta-ol by forming the C-22(23) double bond in the sterol side chain. The third module or late pathway involves the ergosterol synthesis itself through consecutive reactions that mainly occur in the endoplasmic reticulum (ER) membrane. Firstly, the squalene synthase ERG9 catalyzes the condensation of 2 farnesyl pyrophosphate moieties to form squalene, which is the precursor of all steroids. Squalene synthase is crucial for balancing the incorporation of farnesyl diphosphate (FPP) into sterol and nonsterol isoprene synthesis. Secondly, squalene is converted into lanosterol by the consecutive action of the squalene epoxidase ERG1 and the lanosterol synthase ERG7. Then, the delta(24)-sterol C-methyltransferase ERG6 methylates lanosterol at C-24 to produce eburicol. Eburicol is the substrate of the sterol 14-alpha demethylase encoded by CYP51A, CYP51B and CYP51C, to yield 4,4,24-trimethyl ergosta-8,14,24(28)-trienol. CYP51B encodes the enzyme primarily responsible for sterol 14-alpha-demethylation, and plays an essential role in ascospore formation. CYP51A encodes an additional sterol 14-alpha-demethylase, induced on ergosterol depletion and responsible for the intrinsic variation in azole sensitivity. The third CYP51 isoform, CYP51C, does not encode a sterol 14-alpha-demethylase, but is required for full virulence on host wheat ears. The C-14 reductase ERG24 then reduces the C14=C15 double bond which leads to 4,4-dimethylfecosterol. A sequence of further demethylations at C-4, involving the C-4 demethylation complex containing the C-4 methylsterol oxidases ERG25, the sterol-4-alpha-carboxylate 3-dehydrogenase ERG26 and the 3-keto-steroid reductase ERG27, leads to the production of fecosterol via 4-methylfecosterol. ERG28 has a role as a scaffold to help anchor ERG25, ERG26 and ERG27 to the endoplasmic reticulum. The C-8 sterol isomerase ERG2 then catalyzes the reaction which results in unsaturation at C-7 in the B ring of sterols and thus converts fecosterol to episterol. The sterol-C5-desaturases ERG3A and ERG3BB then catalyze the introduction of a C-5 double bond in the B ring to produce 5-dehydroepisterol. The C-22 sterol desaturases ERG5A and ERG5B further convert 5-dehydroepisterol into ergosta-5,7,22,24(28)-tetraen-3beta-ol by forming the C-22(23) double bond in the sterol side chain. Finally, ergosta-5,7,22,24(28)-tetraen-3beta-ol is substrate of the C-24(28) sterol reductase ERG4 to produce ergosterol. The protein is C-22 sterol desaturase ERG5B of Gibberella zeae (strain ATCC MYA-4620 / CBS 123657 / FGSC 9075 / NRRL 31084 / PH-1) (Wheat head blight fungus).